The sequence spans 679 residues: Glycine--tRNA ligase beta subunit (679 aa).

This sequence belongs to the class-II aminoacyl-tRNA synthetase family. Tetramer of two alpha and two beta subunits.

It is found in the cytoplasm. The catalysed reaction is tRNA(Gly) + glycine + ATP = glycyl-tRNA(Gly) + AMP + diphosphate. In Streptococcus agalactiae serotype Ia (strain ATCC 27591 / A909 / CDC SS700), this protein is Glycine--tRNA ligase beta subunit.